The primary structure comprises 592 residues: Aspartate--tRNA ligase (592 aa).

Residue glutamate 171 coordinates L-aspartate. The segment at 195–198 is aspartate; it reads QLFK. L-aspartate is bound at residue arginine 217. ATP-binding positions include 217–219 and glutamine 226; that span reads RDE. Histidine 448 is a binding site for L-aspartate. Glutamate 482 is a binding site for ATP. Arginine 489 is an L-aspartate binding site. 534 to 537 serves as a coordination point for ATP; that stretch reads GLDR.

This sequence belongs to the class-II aminoacyl-tRNA synthetase family. Type 1 subfamily. Homodimer.

The protein localises to the cytoplasm. The catalysed reaction is tRNA(Asp) + L-aspartate + ATP = L-aspartyl-tRNA(Asp) + AMP + diphosphate. Catalyzes the attachment of L-aspartate to tRNA(Asp) in a two-step reaction: L-aspartate is first activated by ATP to form Asp-AMP and then transferred to the acceptor end of tRNA(Asp). This Pseudoalteromonas translucida (strain TAC 125) protein is Aspartate--tRNA ligase.